Consider the following 100-residue polypeptide: NADH-quinone oxidoreductase subunit K (100 aa).

A run of 3 helical transmembrane segments spans residues 4 to 24 (ITYY…GVLV), 29 to 49 (LVVF…FVAF), and 63 to 83 (FFVI…VIAV).

It belongs to the complex I subunit 4L family. NDH-1 is composed of 14 different subunits. Subunits NuoA, H, J, K, L, M, N constitute the membrane sector of the complex.

The protein resides in the cell inner membrane. The enzyme catalyses a quinone + NADH + 5 H(+)(in) = a quinol + NAD(+) + 4 H(+)(out). Its function is as follows. NDH-1 shuttles electrons from NADH, via FMN and iron-sulfur (Fe-S) centers, to quinones in the respiratory chain. The immediate electron acceptor for the enzyme in this species is believed to be ubiquinone. Couples the redox reaction to proton translocation (for every two electrons transferred, four hydrogen ions are translocated across the cytoplasmic membrane), and thus conserves the redox energy in a proton gradient. The sequence is that of NADH-quinone oxidoreductase subunit K from Myxococcus xanthus (strain DK1622).